The following is a 287-amino-acid chain: Bifunctional protein FolD (287 aa).

Residues 171 to 173 and I237 each bind NADP(+); that span reads GHS.

Belongs to the tetrahydrofolate dehydrogenase/cyclohydrolase family. As to quaternary structure, homodimer.

It carries out the reaction (6R)-5,10-methylene-5,6,7,8-tetrahydrofolate + NADP(+) = (6R)-5,10-methenyltetrahydrofolate + NADPH. It catalyses the reaction (6R)-5,10-methenyltetrahydrofolate + H2O = (6R)-10-formyltetrahydrofolate + H(+). Its pathway is one-carbon metabolism; tetrahydrofolate interconversion. Functionally, catalyzes the oxidation of 5,10-methylenetetrahydrofolate to 5,10-methenyltetrahydrofolate and then the hydrolysis of 5,10-methenyltetrahydrofolate to 10-formyltetrahydrofolate. The polypeptide is Bifunctional protein FolD (Methanosarcina barkeri (strain Fusaro / DSM 804)).